We begin with the raw amino-acid sequence, 397 residues long: 2-oxoglutarate and iron-dependent oxygenase domain-containing protein ICU11 (397 aa).

The tract at residues 1 to 56 is disordered; the sequence is MCNQTPLRSMALDSSGKQPEQQQQQQPRASSGNGEARLKLRRTPNEEHEPENYEDL. Over residues 18 to 27 the composition is skewed to low complexity; sequence QPEQQQQQQP. One can recognise a Fe2OG dioxygenase domain in the interval 238-339; the sequence is SLDSHHGYIV…RANLILWCRS (102 aa). Residues histidine 260, aspartate 262, and histidine 320 each coordinate Fe cation. Arginine 330 contacts 2-oxoglutarate.

Requires Fe(2+) as cofactor. It depends on L-ascorbate as a cofactor. Expressed in roots, cotyledons, rosette leaves, cauline leaves and inflorescences.

It is found in the nucleus. The protein resides in the nucleoplasm. Functionally, participates in the epigenetic repression of flowering genes in association with CP2. Functions in the repression of several members of the MADS-box transcription factors family, including SEP3, during vegetative development via histone modification. This chain is 2-oxoglutarate and iron-dependent oxygenase domain-containing protein ICU11, found in Arabidopsis thaliana (Mouse-ear cress).